We begin with the raw amino-acid sequence, 463 residues long: MESLKIYNTLAREKQTFVPIEPGRVRMYVCGMTVYDYCHVGHARVMVVFDMVQRWLRAAGYDVTYVRNITDIDDKIIKRAVENGETMSALTGRFIAAMHEDADALGVQRPDHEPRATEYVPQMLSMIGRLQTNGLAYQATDGDVNYAVRKFPGYGKLSGKSLEDLRAGERVAANDAKQDPLDFVLWKSAKADEPAESRWASPWGEGRPGWHIECSAMSCELLGEHFDLHGGGADLQFPHHENEIAQSEGATGKTFVNMWMHNGFVRVNDEKMSKSLGNFFTIRDVLKVYDAEVVRFFILRSHYRSDLNYSDAHLDDARHALTRLYTALKDVPAAVGAKPDWSESHGKRFLEAMNDDFNTPVAVSVLFELASEVNKTRSPELASQLAALAGVIGLLGRDPHVFLQGGVSADGVDAAEVEARIEERRAAKAARDFARADAIRADLLAAGIVLEDKPGGLTEWRRA.

Cys30 contacts Zn(2+). Residues 32–42 carry the 'HIGH' region motif; that stretch reads MTVYDYCHVGH. Zn(2+)-binding residues include Cys214, His239, and Glu243. The 'KMSKS' region motif lies at 271 to 275; the sequence is KMSKS. Position 274 (Lys274) interacts with ATP.

Belongs to the class-I aminoacyl-tRNA synthetase family. In terms of assembly, monomer. The cofactor is Zn(2+).

Its subcellular location is the cytoplasm. The enzyme catalyses tRNA(Cys) + L-cysteine + ATP = L-cysteinyl-tRNA(Cys) + AMP + diphosphate. This Ralstonia pickettii (strain 12J) protein is Cysteine--tRNA ligase.